Reading from the N-terminus, the 396-residue chain is NADH-quinone oxidoreductase subunit D (396 aa).

The protein belongs to the complex I 49 kDa subunit family. In terms of assembly, NDH-1 is composed of 14 different subunits. Subunits NuoB, C, D, E, F, and G constitute the peripheral sector of the complex.

It is found in the cell inner membrane. It carries out the reaction a quinone + NADH + 5 H(+)(in) = a quinol + NAD(+) + 4 H(+)(out). NDH-1 shuttles electrons from NADH, via FMN and iron-sulfur (Fe-S) centers, to quinones in the respiratory chain. The immediate electron acceptor for the enzyme in this species is believed to be ubiquinone. Couples the redox reaction to proton translocation (for every two electrons transferred, four hydrogen ions are translocated across the cytoplasmic membrane), and thus conserves the redox energy in a proton gradient. This is NADH-quinone oxidoreductase subunit D from Methylobacterium radiotolerans (strain ATCC 27329 / DSM 1819 / JCM 2831 / NBRC 15690 / NCIMB 10815 / 0-1).